The chain runs to 270 residues: Probable septum site-determining protein MinC (270 aa).

Residues 105–129 (DRRAPSSKAADEAPVQQAEPAAPAA) form a disordered region. Residues 116–129 (EAPVQQAEPAAPAA) show a composition bias toward low complexity.

It belongs to the MinC family. In terms of assembly, interacts with MinD and FtsZ.

In terms of biological role, cell division inhibitor that blocks the formation of polar Z ring septums. Rapidly oscillates between the poles of the cell to destabilize FtsZ filaments that have formed before they mature into polar Z rings. Prevents FtsZ polymerization. The sequence is that of Probable septum site-determining protein MinC from Burkholderia mallei (strain NCTC 10247).